The following is a 96-amino-acid chain: Putative septation protein SpoVG (96 aa).

The protein belongs to the SpoVG family.

Could be involved in septation. This chain is Putative septation protein SpoVG, found in Geobacillus sp. (strain WCH70).